A 561-amino-acid chain; its full sequence is Phosphatidylinositol 4-kinase gamma 1 (561 aa).

Positions 121–416 (GAQPLLLPSG…SVFGKTSEDS (296 aa)) constitute a PI3K/PI4K catalytic domain. The interval 127–133 (LPSGMGG) is G-loop. Residues 128-134 (PSGMGGA), lysine 149, and 233-236 (QRFV) contribute to the ATP site. The tract at residues 266–274 (LNLDRHAGN) is catalytic loop. Residues 296–322 (PIDHGLCLPECLDDPYFEWLNWPQALV) are activation loop. ATP is bound at residue aspartate 298. The disordered stretch occupies residues 456–520 (PPLVPRGPRA…PISPNHDESK (65 aa)). Over residues 467 to 484 (TIPNDVTASMSSSQNQRI) the composition is skewed to polar residues.

Belongs to the PI3/PI4-kinase family. Type II PI4K subfamily.

It carries out the reaction a 1,2-diacyl-sn-glycero-3-phospho-(1D-myo-inositol) + ATP = a 1,2-diacyl-sn-glycero-3-phospho-(1D-myo-inositol 4-phosphate) + ADP + H(+). The phosphorylation of phosphatidylinositol (PI) to PI4P is the first committed step in the generation of phosphatidylinositol 4,5-bisphosphate (PIP2), a precursor of the second messenger inositol 1,4,5-trisphosphate (InsP3). This is Phosphatidylinositol 4-kinase gamma 1 (PI4KG1) from Arabidopsis thaliana (Mouse-ear cress).